We begin with the raw amino-acid sequence, 307 residues long: Yop proteins translocation protein Q (307 aa).

The protein belongs to the FliN/MopA/SpaO family.

Functionally, component of the Yop secretion machinery. The chain is Yop proteins translocation protein Q (yscQ) from Yersinia pestis.